Reading from the N-terminus, the 2389-residue chain is Highly reducing polyketide synthase Dhc3 (2389 aa).

Positions 9 to 433 (DVPIAVVGLA…GTNGHAVLES (425 aa)) constitute a Ketosynthase family 3 (KS3) domain. Residues Cys-181, His-316, and His-356 each act as for beta-ketoacyl synthase activity in the active site. The tract at residues 551 to 861 (FVFTGQGAQW…LSGPVEQILN (311 aa)) is malonyl-CoA:ACP transacylase (MAT) domain. Ser-641 serves as the catalytic For malonyltransferase activity. Positions 944–1079 (RSLIGAQVPM…GLITIDYADT (136 aa)) are N-terminal hotdog fold. The PKS/mFAS DH domain occupies 944–1263 (RSLIGAQVPM…VSELENDTEA (320 aa)). Residues 946-1262 (LIGAQVPMMD…RVSELENDTE (317 aa)) are dehydratase (DH) domain. The active-site Proton acceptor; for dehydratase activity is the His-976. The interval 1107-1263 (PDICSKEDFY…VSELENDTEA (157 aa)) is C-terminal hotdog fold. Asp-1173 (proton donor; for dehydratase activity) is an active-site residue. The segment at 1673 to 1987 (GLLDTLAFIE…QGKHRGKLVL (315 aa)) is enoylreductase (ER) domain. Residues 2011 to 2191 (ATYLFVGGLG…VAVDLGIMRD (181 aa)) form a catalytic ketoreductase (KRc) domain region. A Carrier domain is found at 2302 to 2379 (EAVSIITDAL…EFAEKIAEKS (78 aa)). Ser-2339 carries the post-translational modification O-(pantetheine 4'-phosphoryl)serine.

It participates in mycotoxin biosynthesis. Its function is as follows. Highly reducing polyketide synthase; part of the gene cluster that mediates the biosynthesis of 10,11-dehydrocurvularin, a prevalent fungal phytotoxin with heat shock response and immune-modulatory activities. The highly reducing polyketide synthase Dhc3 is responsible for biosynthesis up to the tetraketide stage. The non-reducing polyketide synthase Dhc5 then conducts four additional chain extension cycles, producing the unreduced part of the nascent octaketide from C-1 to C-8 in 10,11-dehydrocurvularin. This is Highly reducing polyketide synthase Dhc3 (Dhc3) from Alternaria cinerariae.